The primary structure comprises 276 residues: uncharacterized protein (276 aa).

The signal sequence occupies residues 1–29 (MKSHVRSFKTYIRDEIIKKGGWVNAHAHA).

The protein belongs to the metallo-dependent hydrolases superfamily.

This is an uncharacterized protein from Haemophilus influenzae (strain ATCC 51907 / DSM 11121 / KW20 / Rd).